A 621-amino-acid polypeptide reads, in one-letter code: Chaperone protein HscA homolog (621 aa).

It belongs to the heat shock protein 70 family.

Chaperone involved in the maturation of iron-sulfur cluster-containing proteins. Has a low intrinsic ATPase activity which is markedly stimulated by HscB. In Cupriavidus necator (strain ATCC 17699 / DSM 428 / KCTC 22496 / NCIMB 10442 / H16 / Stanier 337) (Ralstonia eutropha), this protein is Chaperone protein HscA homolog.